The sequence spans 118 residues: p-cumate 2,3-dioxygenase system, ferredoxin component (118 aa).

In terms of domain architecture, Rieske spans 14 to 111 (VGLCATDDVA…VTVEGGQIFV (98 aa)). Positions 54, 56, 74, and 77 each coordinate [2Fe-2S] cluster.

Belongs to the bacterial ring-hydroxylating dioxygenase ferredoxin component family. In terms of assembly, the p-cumate 2,3-dioxygenase multicomponent enzyme system is composed of an electron transfer component and a dioxygenase component (iron sulfur protein (ISP)). The electron transfer component is composed of a ferredoxin reductase (CmtAa) and a ferredoxin (CmtAd), and the dioxygenase component is formed of a large alpha subunit (CmtAb) and a small beta subunit (CmtAc). [2Fe-2S] cluster is required as a cofactor.

It functions in the pathway aromatic compound metabolism; p-cumate degradation; acetaldehyde and pyruvate from p-cumate. Component of the p-cumate 2,3-dioxygenase multicomponent enzyme system which catalyzes the incorporation of both atoms of molecular oxygen into p-cumate to form cis-2,3-dihydroxy-2,3-dihydro-p-cumate. Functions as an intermediate electron transfer protein via a specific interaction with iron sulfur protein components (ISP)(CmtAb and CmtAc). This Pseudomonas putida (Arthrobacter siderocapsulatus) protein is p-cumate 2,3-dioxygenase system, ferredoxin component.